Here is a 337-residue protein sequence, read N- to C-terminus: tRNA N6-adenosine threonylcarbamoyltransferase (337 aa).

Fe cation contacts are provided by histidine 111 and histidine 115. Substrate contacts are provided by residues 134–138 (LVSGG), aspartate 167, glycine 180, and asparagine 272. Aspartate 300 lines the Fe cation pocket.

This sequence belongs to the KAE1 / TsaD family. The cofactor is Fe(2+).

Its subcellular location is the cytoplasm. The enzyme catalyses L-threonylcarbamoyladenylate + adenosine(37) in tRNA = N(6)-L-threonylcarbamoyladenosine(37) in tRNA + AMP + H(+). In terms of biological role, required for the formation of a threonylcarbamoyl group on adenosine at position 37 (t(6)A37) in tRNAs that read codons beginning with adenine. Is involved in the transfer of the threonylcarbamoyl moiety of threonylcarbamoyl-AMP (TC-AMP) to the N6 group of A37, together with TsaE and TsaB. TsaD likely plays a direct catalytic role in this reaction. The chain is tRNA N6-adenosine threonylcarbamoyltransferase from Aeromonas hydrophila subsp. hydrophila (strain ATCC 7966 / DSM 30187 / BCRC 13018 / CCUG 14551 / JCM 1027 / KCTC 2358 / NCIMB 9240 / NCTC 8049).